The sequence spans 101 residues: Small ribosomal subunit protein uS14 (101 aa).

It belongs to the universal ribosomal protein uS14 family. Part of the 30S ribosomal subunit. Contacts proteins S3 and S10.

Functionally, binds 16S rRNA, required for the assembly of 30S particles and may also be responsible for determining the conformation of the 16S rRNA at the A site. This Ruegeria pomeroyi (strain ATCC 700808 / DSM 15171 / DSS-3) (Silicibacter pomeroyi) protein is Small ribosomal subunit protein uS14.